Here is a 373-residue protein sequence, read N- to C-terminus: Glutamate 5-kinase (373 aa).

Position 15 (Lys15) interacts with ATP. Residues Ser56, Asp143, and Asn155 each coordinate substrate. ATP is bound at residue 175-176 (SD). Positions 281 to 358 (KGTLTIDAGA…PDVMTILGIS (78 aa)) constitute a PUA domain.

It belongs to the glutamate 5-kinase family.

It is found in the cytoplasm. The enzyme catalyses L-glutamate + ATP = L-glutamyl 5-phosphate + ADP. It participates in amino-acid biosynthesis; L-proline biosynthesis; L-glutamate 5-semialdehyde from L-glutamate: step 1/2. Functionally, catalyzes the transfer of a phosphate group to glutamate to form L-glutamate 5-phosphate. The chain is Glutamate 5-kinase from Bradyrhizobium diazoefficiens (strain JCM 10833 / BCRC 13528 / IAM 13628 / NBRC 14792 / USDA 110).